Here is a 276-residue protein sequence, read N- to C-terminus: MAVEKKFVQEGFTKALVDEYLAKELDRAGYGGMVMNRTPMGTQITVYAEKPGMVIGKGGKLIRKLTRDLERRFRLDNPQIDVQDVGKSDLNARVVANRLASSLEHGWYFRKAGQSMLRRVMDSGALGCEIVISGKLTGPRSRVEKFLAGYIKHSGKPAEEIVDTGYAVAVKKLGAIGCQVRIVPPGAVLPDDFQINAPPKEPEKEPVVEEAVLEAEPSQAAETQEQQAGEKKSELDRLLDEPVETPPTTEEGQSPQEPESRTEMSEAETHGDIQDR.

A KH type-2 domain is found at 17 to 86 (VDEYLAKELD…NPQIDVQDVG (70 aa)). Positions 193-276 (FQINAPPKEP…AETHGDIQDR (84 aa)) are disordered. Over residues 214–227 (EAEPSQAAETQEQQ) the composition is skewed to low complexity. Composition is skewed to basic and acidic residues over residues 228 to 240 (AGEKKSELDRLLD) and 258 to 276 (PESRTEMSEAETHGDIQDR).

This sequence belongs to the universal ribosomal protein uS3 family. As to quaternary structure, part of the 30S ribosomal subunit.

Binds the lower part of the 30S subunit head. In Methanothrix thermoacetophila (strain DSM 6194 / JCM 14653 / NBRC 101360 / PT) (Methanosaeta thermophila), this protein is Small ribosomal subunit protein uS3.